The following is a 173-amino-acid chain: CDP-archaeol synthase (173 aa).

5 helical membrane-spanning segments follow: residues Gly15–Gly35, Gly59–Gly79, Ala84–Val104, Val118–Trp138, and Gly142–Ile162.

The protein belongs to the CDP-archaeol synthase family. It depends on Mg(2+) as a cofactor.

It localises to the cell membrane. It catalyses the reaction 2,3-bis-O-(geranylgeranyl)-sn-glycerol 1-phosphate + CTP + H(+) = CDP-2,3-bis-O-(geranylgeranyl)-sn-glycerol + diphosphate. Its pathway is membrane lipid metabolism; glycerophospholipid metabolism. Functionally, catalyzes the formation of CDP-2,3-bis-(O-geranylgeranyl)-sn-glycerol (CDP-archaeol) from 2,3-bis-(O-geranylgeranyl)-sn-glycerol 1-phosphate (DGGGP) and CTP. This reaction is the third ether-bond-formation step in the biosynthesis of archaeal membrane lipids. This Methanopyrus kandleri (strain AV19 / DSM 6324 / JCM 9639 / NBRC 100938) protein is CDP-archaeol synthase.